The chain runs to 490 residues: Cruciferin BnC1 (490 aa).

An N-terminal signal peptide occupies residues 1–23 (MARLSSLLSFSLALLIFLHGSTA). Disulfide bonds link cysteine 30-cysteine 63 and cysteine 106-cysteine 307. Cupin type-1 domains follow at residues 35 to 263 (LNAL…RTAQ) and 313 to 462 (DNLD…EEAR). Threonine 109 carries the post-translational modification Phosphothreonine. Residues 113–164 (SSVFQPSGGSPSGEGQGQGQQGQGQGHQGQGQGQQGQQGQQGQQSQGQGFRD) form a disordered region. Gly residues predominate over residues 122–148 (SPSGEGQGQGQQGQGQGHQGQGQGQQG). Positions 149–161 (QQGQQGQQSQGQG) are enriched in low complexity. A Phosphotyrosine modification is found at tyrosine 330. Position 332 is a phosphoserine (serine 332). Threonine 426 carries the post-translational modification Phosphothreonine.

The protein belongs to the 11S seed storage protein (globulins) family. Hexamer; each subunit is composed of an acidic and a basic chain derived from a single precursor and linked by a disulfide bond.

In terms of biological role, this is a seed storage protein. The sequence is that of Cruciferin BnC1 (BnC1) from Brassica napus (Rape).